Here is a 378-residue protein sequence, read N- to C-terminus: GTPase Obg (378 aa).

The region spanning 1 to 159 (MKFVDEATIE…RRLRLELKVL (159 aa)) is the Obg domain. In terms of domain architecture, OBG-type G spans 160 to 336 (ADVGLLGLPN…LIWALQDYLD (177 aa)). GTP contacts are provided by residues 166 to 173 (GLPNAGKS), 191 to 195 (FTTLH), 213 to 216 (DIPG), 288 to 291 (NKLD), and 317 to 319 (SGL). Residues S173 and T193 each contribute to the Mg(2+) site. The interval 345–378 (AQDQADGTYVAEDPRFDATRSDAAPPGAPRGGDE) is disordered.

It belongs to the TRAFAC class OBG-HflX-like GTPase superfamily. OBG GTPase family. Monomer. Requires Mg(2+) as cofactor.

Its subcellular location is the cytoplasm. Functionally, an essential GTPase which binds GTP, GDP and possibly (p)ppGpp with moderate affinity, with high nucleotide exchange rates and a fairly low GTP hydrolysis rate. Plays a role in control of the cell cycle, stress response, ribosome biogenesis and in those bacteria that undergo differentiation, in morphogenesis control. The protein is GTPase Obg of Bordetella petrii (strain ATCC BAA-461 / DSM 12804 / CCUG 43448).